The following is a 179-amino-acid chain: Large ribosomal subunit protein uL6 (179 aa).

It belongs to the universal ribosomal protein uL6 family. As to quaternary structure, part of the 50S ribosomal subunit.

This protein binds to the 23S rRNA, and is important in its secondary structure. It is located near the subunit interface in the base of the L7/L12 stalk, and near the tRNA binding site of the peptidyltransferase center. This is Large ribosomal subunit protein uL6 from Mycolicibacterium vanbaalenii (strain DSM 7251 / JCM 13017 / BCRC 16820 / KCTC 9966 / NRRL B-24157 / PYR-1) (Mycobacterium vanbaalenii).